A 100-amino-acid polypeptide reads, in one-letter code: Small ribosomal subunit protein uS14c (100 aa).

This sequence belongs to the universal ribosomal protein uS14 family. In terms of assembly, part of the 30S ribosomal subunit.

The protein localises to the plastid. It localises to the chloroplast. Functionally, binds 16S rRNA, required for the assembly of 30S particles. The protein is Small ribosomal subunit protein uS14c of Arabis hirsuta (Hairy rock-cress).